The chain runs to 610 residues: Myoneurin (610 aa).

The region spanning Cys-24–Ser-89 is the BTB domain. Positions Ser-156–Tyr-199 are disordered. Over residues Ala-171 to Ala-185 the composition is skewed to basic residues. 2 short sequence motifs (nuclear localization signal) span residues Lys-174–Lys-190 and Lys-257–Lys-262. C2H2-type zinc fingers lie at residues Pro-302–His-324, Tyr-330–His-352, Tyr-358–His-381, Tyr-387–His-409, Tyr-415–His-437, Tyr-443–His-465, Tyr-471–His-493, and Phe-499–His-522. The segment at Thr-519 to Pro-548 is disordered. The segment covering Ser-523–Ser-539 has biased composition (basic and acidic residues).

This sequence belongs to the krueppel C2H2-type zinc-finger protein family. As to expression, mainly expressed in the neuromuscular system. Located in and around synaptic myonuclei in adult muscle. Expression is dysregulated after nerve injury. Also found in the cerebellum, testis, heart, brain and liver.

It localises to the nucleus. This Mus musculus (Mouse) protein is Myoneurin (Mynn).